Reading from the N-terminus, the 102-residue chain is Small integral membrane protein 29 (102 aa).

An N-linked (GlcNAc...) asparagine glycan is attached at Asn3. A helical transmembrane segment spans residues Val21–Val41.

In terms of tissue distribution, expressed in spleen, thymus, prostate, testis, uterus, small intestine, colon and peripheral blood leukocytes.

Its subcellular location is the membrane. The sequence is that of Small integral membrane protein 29 from Homo sapiens (Human).